The sequence spans 95 residues: MKNIYGVLKGPVLTEKAAILQEIDGQVVFKVHPKSNKIEIKRAIELMFDVKVKDVRTASMRGKEKRVGKTVGQTKEWKKAYVSLAEGEINFTDEI.

The protein belongs to the universal ribosomal protein uL23 family. In terms of assembly, part of the 50S ribosomal subunit. Contacts protein L29, and trigger factor when it is bound to the ribosome.

In terms of biological role, one of the early assembly proteins it binds 23S rRNA. One of the proteins that surrounds the polypeptide exit tunnel on the outside of the ribosome. Forms the main docking site for trigger factor binding to the ribosome. This is Large ribosomal subunit protein uL23 from Desulfotalea psychrophila (strain LSv54 / DSM 12343).